A 297-amino-acid polypeptide reads, in one-letter code: Formylmethanofuran--tetrahydromethanopterin formyltransferase (297 aa).

Belongs to the FTR family. Homotetramer.

The protein resides in the cytoplasm. It catalyses the reaction N-formylmethanofuran + 5,6,7,8-tetrahydromethanopterin + H(+) = N(5)-formyl-5,6,7,8-tetrahydromethanopterin + methanofuran. It functions in the pathway one-carbon metabolism; methanogenesis from CO(2); 5,10-methenyl-5,6,7,8-tetrahydromethanopterin from CO(2): step 2/3. Catalyzes the reversible transfer of a formyl group from formylmethanofuran (formyl-MFR) to tetrahydromethanopterin (H(4)MPT) to produce 5-formyl tetrahydromethanopterin (5-formyl-H(4)MPT) and methanofuran (MFR). The polypeptide is Formylmethanofuran--tetrahydromethanopterin formyltransferase (Methanococcoides burtonii (strain DSM 6242 / NBRC 107633 / OCM 468 / ACE-M)).